The following is a 134-amino-acid chain: Calvin cycle protein CP12-3, chloroplastic (134 aa).

Residues 1 to 21 are disordered; the sequence is MISGSATASHGRVLLPSQRER. The transit peptide at 1-42 directs the protein to the chloroplast; sequence MISGSATASHGRVLLPSQRERRPVSTGSNILRFRETVPRQFS. Disulfide bonds link Cys78-Cys87 and Cys120-Cys129.

The protein belongs to the CP12 family. Monomer. Component of a complex that contains two dimers of PRK, two tetramers of GAPDH and CP12. CP12 associates with GAPDH, causing its conformation to change. This GAPDH/CP12 complex binds PRK to form a half-complex (one unit). This unit probably dimerizes due partially to interactions between the enzymes of each unit. In terms of processing, contains two disulfide bonds; only the oxidized protein, with two disulfide bonds, is active in complex formation. The C-terminal disulfide is involved in the interaction with GAPDH and the N-terminal disulfide mediates the binding of PRK with this binary complex. Mostly expressed, at low levels, in stems and, to a lesser extent, in leaves and roots.

The protein resides in the plastid. It localises to the chloroplast. In terms of biological role, acts as a linker essential in the assembly of a core complex of PRK/GAPDH. Coordinates the reversible inactivation of chloroplast enzymes GAPDH and PRK during darkness in photosynthetic tissues. This Arabidopsis thaliana (Mouse-ear cress) protein is Calvin cycle protein CP12-3, chloroplastic (CP12-3).